A 557-amino-acid chain; its full sequence is Potassium-transporting ATPase potassium-binding subunit (557 aa).

A run of 10 helical transmembrane segments spans residues 1-21, 62-82, 132-152, 176-196, 253-273, 279-299, 371-391, 415-435, 482-502, and 528-548; these read MEILQIAIILIVFVLLCIPIG, QYIFALLMCNAVPAIIGYIIL, IVITFFMFFAAATGIAVALAF, ILLPLSIIVAIFYIGQGVPQT, VQIITLLLLAGSMVVCFGHMI, AVAIFAAMMVLLLAGAAICFS, IFGGVGVGFMNMIMYAILTVF, LVAFAIIVHPFLILMSSALAL, VSAGVVMFLGRYLSIIILLAV, and VTLIVIIVIIGALTFLPAVAL.

The protein belongs to the KdpA family. As to quaternary structure, the system is composed of three essential subunits: KdpA, KdpB and KdpC.

It is found in the cell membrane. Its function is as follows. Part of the high-affinity ATP-driven potassium transport (or Kdp) system, which catalyzes the hydrolysis of ATP coupled with the electrogenic transport of potassium into the cytoplasm. This subunit binds the extracellular potassium ions and delivers the ions to the membrane domain of KdpB through an intramembrane tunnel. This is Potassium-transporting ATPase potassium-binding subunit from Clostridium acetobutylicum (strain ATCC 824 / DSM 792 / JCM 1419 / IAM 19013 / LMG 5710 / NBRC 13948 / NRRL B-527 / VKM B-1787 / 2291 / W).